Reading from the N-terminus, the 1058-residue chain is Ubiquitin-like modifier-activating enzyme 1 (1058 aa).

A disordered region spans residues 1–47 (MSSSPLSKKRRVSGPDPKPGSNCSPAQSVLSEVPSVPTNGMAKNGSE). Ser-2 bears the N-acetylserine mark. Ser-2 is modified (N-acetylalanine). At Ser-4 the chain carries Phosphoserine. Residues 5–11 (PLSKKRR) carry the Nuclear localization signal motif. Phosphoserine is present on residues Ser-13, Ser-21, Ser-24, and Ser-46. Residues 21–30 (SNCSPAQSVL) are compositionally biased toward polar residues. At Tyr-55 the chain carries Phosphotyrosine. A run of 2 repeats spans residues 63–199 (GHEA…GQLF) and 459–611 (GSDL…QVVI). The 2 approximate repeats stretch occupies residues 63-611 (GHEAMKRLQT…GTKGNVQVVI (549 aa)). Residues Ala-478, Asp-504, Arg-515, Lys-528, and 576-577 (DN) each bind ATP. Residue Lys-528 is modified to N6-succinyllysine. Residue Cys-632 is the Glycyl thioester intermediate of the active site. Lys-671 is modified (N6-acetyllysine). Thr-800 is subject to Phosphothreonine. 4 positions are modified to phosphoserine: Ser-810, Ser-816, Ser-820, and Ser-835. Lys-980 is modified (N6-acetyllysine).

Belongs to the ubiquitin-activating E1 family. In terms of assembly, monomer. Interacts with GAN (via BTB domain). Post-translationally, ISGylated. Detected in erythrocytes (at protein level). Ubiquitous.

It is found in the cytoplasm. Its subcellular location is the mitochondrion. The protein localises to the nucleus. The enzyme catalyses ATP + ubiquitin + [E1 ubiquitin-activating enzyme]-L-cysteine = AMP + diphosphate + S-ubiquitinyl-[E1 ubiquitin-activating enzyme]-L-cysteine.. Its pathway is protein modification; protein ubiquitination. Its function is as follows. Catalyzes the first step in ubiquitin conjugation to mark cellular proteins for degradation through the ubiquitin-proteasome system. Activates ubiquitin by first adenylating its C-terminal glycine residue with ATP, and thereafter linking this residue to the side chain of a cysteine residue in E1, yielding a ubiquitin-E1 thioester and free AMP. Essential for the formation of radiation-induced foci, timely DNA repair and for response to replication stress. Promotes the recruitment of TP53BP1 and BRCA1 at DNA damage sites. In Homo sapiens (Human), this protein is Ubiquitin-like modifier-activating enzyme 1 (UBA1).